The following is a 181-amino-acid chain: Akirin-2 (181 aa).

The disordered stretch occupies residues 18–48; it reads SPAASPKRRRCAPLSPSGPSPQKYLRLEPSP. A Nuclear localization signal motif is present at residues 23-28; the sequence is PKRRRC. The SYVS motif signature appears at 178 to 181; the sequence is SYVS.

Belongs to the akirin family. Homodimer. Interacts with actl6a/baf53a. Interacts with gmnn.

It is found in the nucleus. Its function is as follows. Molecular adapter that acts as a bridge between a variety of multiprotein complexes, and which is involved in embryonic development, immunity, myogenesis and brain development. Plays a key role in nuclear protein degradation by promoting import of proteasomes into the nucleus: acts by bridging fully assembled 20S proteasomes with nuclear import receptor ipo9. Involved in both neural precursor maintenance and terminal neural differentiation: bridges gmnn and actl6a/baf53a in neural progenitor cells, antagonizing the activity of gmnn, thereby suppressing sox2 expression. Also required for proper activation of neurod1 and neuronal differentiation. Involved in myogenesis: required for skeletal muscle formation and skeletal development, possibly by regulating expression of muscle differentiation factors. The protein is Akirin-2 of Xenopus laevis (African clawed frog).